Reading from the N-terminus, the 262-residue chain is MESELVRRLAPRLGLAEPSVLRKAEEFLRLSKVKCVSLSARSSETSNAVICLDLAASCRKCPLDRAYLIRLSGLNKMMYQSCLKSFECLLGLNSNVGIRDLAVQFSCTEAVNLAAEILQSYKSGLPETQRADLDLSRPLFTTAALLSACKILKIKVDKTKMITTSGVKKAILDRLCKQLEKIGQQINRDSADLARPALKRKKPEFSPTLKKKEPGLEPPAKEIEVIETLHKLPKDEDLTQDYEEWKRKILENAAKAQTATAE.

Positions 197–217 (ALKRKKPEFSPTLKKKEPGLE) are disordered. Lysine 221 participates in a covalent cross-link: Glycyl lysine isopeptide (Lys-Gly) (interchain with G-Cter in SUMO2). Phosphothreonine is present on threonine 239.

It belongs to the ORC6 family. As to quaternary structure, component of ORC, a complex composed of at least 6 subunits: ORC1, ORC2, ORC3, ORC4, ORC5 and ORC6. ORC is regulated in a cell-cycle dependent manner. It is sequentially assembled at the exit from anaphase of mitosis and disassembled as cells enter S phase. Interacts with DBF4.

The protein localises to the nucleus. Its function is as follows. Component of the origin recognition complex (ORC) that binds origins of replication. DNA-binding is ATP-dependent. The specific DNA sequences that define origins of replication have not been identified yet. ORC is required to assemble the pre-replication complex necessary to initiate DNA replication. The chain is Origin recognition complex subunit 6 (Orc6) from Mus musculus (Mouse).